A 219-amino-acid chain; its full sequence is Ran-binding protein 1 homolog c (219 aa).

Residues 1 to 11 (MASTEPERENR) are compositionally biased toward basic and acidic residues. Disordered stretches follow at residues 1-30 (MAST…VAPI) and 160-219 (QVGK…EAST). Residues 12–23 (EDETEVNEDEDT) are compositionally biased toward acidic residues. The 136-residue stretch at 26 to 161 (QVAPIVRLEE…FTEIAESQQV (136 aa)) folds into the RanBD1 domain. A compositionally biased stretch (basic and acidic residues) spans 185 to 219 (SEEKAKEAEEKEPAKEDKETKKEKVEEEKKTEAST).

The protein localises to the nucleus. It is found in the nuclear pore complex. The protein is Ran-binding protein 1 homolog c (RANBP1C) of Arabidopsis thaliana (Mouse-ear cress).